Consider the following 87-residue polypeptide: MANHKSAAKRARQSIRKTAVNNARKSTVKTAEKKLVKAIEAKDLKALPELLKNFSSQVMKAAKTGVIKKETASRKISRLSTRASATK.

Positions 1 to 15 (MANHKSAAKRARQSI) are enriched in basic residues. The segment at 1–29 (MANHKSAAKRARQSIRKTAVNNARKSTVK) is disordered. Polar residues predominate over residues 19–29 (AVNNARKSTVK).

This sequence belongs to the bacterial ribosomal protein bS20 family.

Its function is as follows. Binds directly to 16S ribosomal RNA. The protein is Small ribosomal subunit protein bS20 of Bdellovibrio bacteriovorus (strain ATCC 15356 / DSM 50701 / NCIMB 9529 / HD100).